An 861-amino-acid chain; its full sequence is Xylan 1,4-beta-xylosidase (861 aa).

The signal sequence occupies residues 1-19 (MKYQLFLSLALCVGLGASA). Aspartate 269 serves as the catalytic Nucleophile. Positions 458-600 (DGKKGLKGTF…DYQETIAQLK (143 aa)) constitute a PA14 domain. Glutamate 616 functions as the Proton donor/acceptor in the catalytic mechanism.

It belongs to the glycosyl hydrolase 3 family. In terms of assembly, exists as a large polymeric species, presumably as a homononamer.

The catalysed reaction is Hydrolysis of (1-&gt;4)-beta-D-xylans, to remove successive D-xylose residues from the non-reducing termini.. It catalyses the reaction Hydrolysis of terminal non-reducing alpha-L-arabinofuranoside residues in alpha-L-arabinosides.. Its pathway is glycan degradation; xylan degradation. Involved in degradation of plant cell wall polysaccharides. Has beta-xylosidase activity via its capacity to hydrolyze glycosidic linkages of beta-1,4-xylo-oligosaccharides of various lengths (X2 to X6), releasing xylose monomers. To a much lesser extent, also has alpha-L-arabinofuranosidase activity. Does not possess beta-D-glucosidase activity. Acts synergistically with Xyn10D-Fae1A to increase the release of xylose from xylan. This is Xylan 1,4-beta-xylosidase from Xylanibacter ruminicola (strain ATCC 19189 / DSM 19721 / CIP 105475 / JCM 8958 / 23) (Prevotella ruminicola).